A 190-amino-acid chain; its full sequence is Movement protein (190 aa).

This sequence belongs to the tombusvirus/aureusvirus movement protein p22 family.

The protein localises to the host membrane. Functionally, transports viral genome to neighboring plant cells directly through plasmosdesmata, without any budding. The movement protein allows efficient cell to cell propagation, by bypassing the host cell wall barrier. This is Movement protein from Cucumber necrosis virus (CNV).